The primary structure comprises 773 residues: Lon protease homolog 2, peroxisomal (773 aa).

Residues 9-198 (LPVILVTSGV…MCIKWMNEKK (190 aa)) enclose the Lon N-terminal domain. 336-343 (GPPGIGKT) contacts ATP. Residues 587-766 (PLPAGVCFGL…EDVIGAMMDK (180 aa)) form the Lon proteolytic domain. Residues Ser672 and Lys715 contribute to the active site. The Microbody targeting signal signature appears at 771–773 (AKL).

Belongs to the peptidase S16 family.

The protein localises to the peroxisome matrix. It catalyses the reaction Hydrolysis of proteins in presence of ATP.. Functionally, ATP-dependent serine protease that mediates the selective degradation of misfolded and unassembled polypeptides in the peroxisomal matrix. Necessary for type 2 peroxisome targeting signal (PTS2)-containing protein processing and facilitates peroxisome matrix protein import. This chain is Lon protease homolog 2, peroxisomal, found in Caenorhabditis elegans.